A 392-amino-acid polypeptide reads, in one-letter code: MASISVDQIRKAQRANGPATVLAIGTANPPTSFYQADYPDFYFRVTKNQHMTELKDKFKRICEKTTIKKRHLYLTEDRLNQHPNLLEYMAPSLNTRQDMLVVEIPKLGKEAAMKAIKEWGQPKSRITHLIFCSTNGVDMPGADYECAKLLGLSSSVKRVMLYQQGCHAGGSVLRIAKDLAENNKGARILTINSEITIGIFHSPDETYFDGMVGQALFGDGASATIVGADPDKEIGERPVFEMVSAAQEFIPNSDGAVDGHLTEAGLVYHIHKDVPGLISKNIEKSLVEALNPIGISDWNSLFWIVHPGGPAILNAVEAKLHLKKEKMADTRHVLSEYGNMSSVSIFFIMDKLRKRSLEEGKSTTGDGFEWGVLFGFGPGLTVETIVLHSLAN.

Residue Cys166 is part of the active site.

This sequence belongs to the thiolase-like superfamily. Chalcone/stilbene synthases family. In terms of tissue distribution, expressed at the same level in leaves and in glandular trichomes.

The protein localises to the cytoplasm. Chalcone synthase that may use malonyl-CoA and hexanoyl-CoA as substrates but without producing olivetol or olivetolic acid. This chain is Chalcone synthase-like protein 1 (CAN383), found in Cannabis sativa (Hemp).